A 736-amino-acid polypeptide reads, in one-letter code: Myosin-7 (736 aa).

A Myosin motor domain is found at 1 to 342 (NWMVTRINAT…LLGLLEEMRD (342 aa)). The segment at 219–241 (LNKLMTNLRSTHPHFVRCIIPNE) is actin-binding. The IQ domain maps to 345–374 (LSRIITRIQAQSRGVLSRMEYKKLLERRDS). Residues 403-736 (LLKSAETEKE…MNKKREAEFQ (334 aa)) are a coiled coil. Serine 701 bears the Phosphoserine mark. The segment at 716–736 (EAGGATSVQIEMNKKREAEFQ) is disordered. A compositionally biased stretch (basic and acidic residues) spans 727-736 (MNKKREAEFQ).

Belongs to the TRAFAC class myosin-kinesin ATPase superfamily. Myosin family. As to quaternary structure, muscle myosin is a hexameric protein that consists of 2 heavy chain subunits (MHC), 2 alkali light chain subunits (MLC) and 2 regulatory light chain subunits (MLC-2). Interacts with ECPAS. Interacts (via C-terminus) with LRRC39.

The protein resides in the cytoplasm. It is found in the myofibril. The protein localises to the sarcomere. Its function is as follows. Myosins are actin-based motor molecules with ATPase activity essential for muscle contraction. Forms regular bipolar thick filaments that, together with actin thin filaments, constitute the fundamental contractile unit of skeletal and cardiac muscle. The sequence is that of Myosin-7 (MYH7) from Oryctolagus cuniculus (Rabbit).